A 171-amino-acid chain; its full sequence is MNLQQQLAYCQQHQQRLQLRHFDNETAWQLGEKIKRQAEKQGVALAIDITVNHQTLFSYAMAGTCAENQDWLRRKRNVVELLSTSSYAAGLMLQQRETSLDARYGVSLRDYAALGGAFPLQIKQAGIIGSVNVSGAPHLDDHNLLLQVLADFVGLPTGSIELLTPLTPLSA.

Belongs to the UPF0303 family.

The polypeptide is UPF0303 protein YPN_2129 (Yersinia pestis bv. Antiqua (strain Nepal516)).